Consider the following 377-residue polypeptide: Queuine tRNA-ribosyltransferase (377 aa).

Residue D89 is the Proton acceptor of the active site. Substrate is bound by residues 89–93 (DSGGF), D143, Q188, and G215. An RNA binding region spans residues 246–252 (GVGKPED). Catalysis depends on D265, which acts as the Nucleophile. Positions 270-274 (TRNAR) are RNA binding; important for wobble base 34 recognition. C303, C305, C308, and H334 together coordinate Zn(2+).

Belongs to the queuine tRNA-ribosyltransferase family. In terms of assembly, homodimer. Within each dimer, one monomer is responsible for RNA recognition and catalysis, while the other monomer binds to the replacement base PreQ1. Requires Zn(2+) as cofactor.

It catalyses the reaction 7-aminomethyl-7-carbaguanine + guanosine(34) in tRNA = 7-aminomethyl-7-carbaguanosine(34) in tRNA + guanine. Its pathway is tRNA modification; tRNA-queuosine biosynthesis. In terms of biological role, catalyzes the base-exchange of a guanine (G) residue with the queuine precursor 7-aminomethyl-7-deazaguanine (PreQ1) at position 34 (anticodon wobble position) in tRNAs with GU(N) anticodons (tRNA-Asp, -Asn, -His and -Tyr). Catalysis occurs through a double-displacement mechanism. The nucleophile active site attacks the C1' of nucleotide 34 to detach the guanine base from the RNA, forming a covalent enzyme-RNA intermediate. The proton acceptor active site deprotonates the incoming PreQ1, allowing a nucleophilic attack on the C1' of the ribose to form the product. After dissociation, two additional enzymatic reactions on the tRNA convert PreQ1 to queuine (Q), resulting in the hypermodified nucleoside queuosine (7-(((4,5-cis-dihydroxy-2-cyclopenten-1-yl)amino)methyl)-7-deazaguanosine). The sequence is that of Queuine tRNA-ribosyltransferase from Acinetobacter baumannii (strain ACICU).